We begin with the raw amino-acid sequence, 186 residues long: Large ribosomal subunit protein uL6 (186 aa).

It belongs to the universal ribosomal protein uL6 family. Part of the 50S ribosomal subunit.

Functionally, this protein binds to the 23S rRNA, and is important in its secondary structure. It is located near the subunit interface in the base of the L7/L12 stalk, and near the tRNA binding site of the peptidyltransferase center. The polypeptide is Large ribosomal subunit protein uL6 (Ignicoccus hospitalis (strain KIN4/I / DSM 18386 / JCM 14125)).